The following is a 141-amino-acid chain: Large ribosomal subunit protein bL17 (141 aa).

This sequence belongs to the bacterial ribosomal protein bL17 family. As to quaternary structure, part of the 50S ribosomal subunit. Contacts protein L32.

This is Large ribosomal subunit protein bL17 from Allorhizobium ampelinum (strain ATCC BAA-846 / DSM 112012 / S4) (Agrobacterium vitis (strain S4)).